The following is a 461-amino-acid chain: Nuclear distribution protein PAC1 (461 aa).

Residues 9–41 (QAEELHKAIIAYLSANNLSSSATALRTELGLAE) form the LisH domain. A coiled-coil region spans residues 61-88 (TSVVRLQKKIMDLESRNNALQSELDNAT). WD repeat units follow at residues 114-155 (SHQN…RTIK), 157-197 (HTRP…KNIR), 201-248 (GHDH…CLKT), 251-290 (GHTA…PENR), 295-355 (GHDH…LKTL), 357-396 (GHDN…KCVK), 401-444 (VHER…VRIR), and 446-461 (VIAT…IFAN).

The protein belongs to the WD repeat LIS1/nudF family. In terms of assembly, self-associates. Interacts with NDL1 and dynein.

The protein localises to the cytoplasm. The protein resides in the cytoskeleton. It is found in the spindle pole. In terms of biological role, positively regulates the activity of the minus-end directed microtubule motor protein dynein. May enhance dynein-mediated microtubule sliding by targeting dynein to the microtubule plus end. Required for nuclear migration during vegetative growth as well as development. Required for retrograde early endosome (EE) transport from the hyphal tip. Required for localization of dynein to the mitotic spindle poles. Recruits additional proteins to the dynein complex at SPBs. This Pyricularia oryzae (strain 70-15 / ATCC MYA-4617 / FGSC 8958) (Rice blast fungus) protein is Nuclear distribution protein PAC1.